The sequence spans 180 residues: Ribulose bisphosphate carboxylase small subunit, chloroplastic 2 (180 aa).

A chloroplast-targeting transit peptide spans 1–56 (MASSVLSSAAVATVSRTPAQASMVAPFTGLKSTVGFPATKKNDDITSLASNGGRVQ).

Belongs to the RuBisCO small chain family. In terms of assembly, heterohexadecamer of 8 large and 8 small subunits.

It is found in the plastid. The protein localises to the chloroplast. In terms of biological role, ruBisCO catalyzes two reactions: the carboxylation of D-ribulose 1,5-bisphosphate, the primary event in carbon dioxide fixation, as well as the oxidative fragmentation of the pentose substrate. Both reactions occur simultaneously and in competition at the same active site. Although the small subunit is not catalytic it is essential for maximal activity. This chain is Ribulose bisphosphate carboxylase small subunit, chloroplastic 2, found in Spinacia oleracea (Spinach).